Consider the following 72-residue polypeptide: Translation initiation factor IF-1 (72 aa).

One can recognise an S1-like domain in the interval 1 to 72 (MAKEENIEMQ…SKGRIIFRAR (72 aa)).

It belongs to the IF-1 family. In terms of assembly, component of the 30S ribosomal translation pre-initiation complex which assembles on the 30S ribosome in the order IF-2 and IF-3, IF-1 and N-formylmethionyl-tRNA(fMet); mRNA recruitment can occur at any time during PIC assembly.

It localises to the cytoplasm. Its function is as follows. One of the essential components for the initiation of protein synthesis. Stabilizes the binding of IF-2 and IF-3 on the 30S subunit to which N-formylmethionyl-tRNA(fMet) subsequently binds. Helps modulate mRNA selection, yielding the 30S pre-initiation complex (PIC). Upon addition of the 50S ribosomal subunit IF-1, IF-2 and IF-3 are released leaving the mature 70S translation initiation complex. In Colwellia psychrerythraea (strain 34H / ATCC BAA-681) (Vibrio psychroerythus), this protein is Translation initiation factor IF-1.